The sequence spans 1399 residues: DNA-directed RNA polymerase subunit beta' (1399 aa).

Residues Cys70, Cys72, Cys85, and Cys88 each contribute to the Zn(2+) site. Positions 460, 462, and 464 each coordinate Mg(2+). Zn(2+) contacts are provided by Cys814, Cys888, Cys895, and Cys898.

The protein belongs to the RNA polymerase beta' chain family. In terms of assembly, the RNAP catalytic core consists of 2 alpha, 1 beta, 1 beta' and 1 omega subunit. When a sigma factor is associated with the core the holoenzyme is formed, which can initiate transcription. Mg(2+) serves as cofactor. It depends on Zn(2+) as a cofactor.

It catalyses the reaction RNA(n) + a ribonucleoside 5'-triphosphate = RNA(n+1) + diphosphate. DNA-dependent RNA polymerase catalyzes the transcription of DNA into RNA using the four ribonucleoside triphosphates as substrates. This Pseudomonas savastanoi pv. phaseolicola (strain 1448A / Race 6) (Pseudomonas syringae pv. phaseolicola (strain 1448A / Race 6)) protein is DNA-directed RNA polymerase subunit beta'.